The sequence spans 825 residues: Phenylalanine--tRNA ligase beta subunit (825 aa).

Residues arginine 39 to arginine 154 form the tRNA-binding domain. One can recognise a B5 domain in the interval proline 411–glutamate 506. Mg(2+)-binding residues include aspartate 484, aspartate 490, glutamate 493, and glutamate 494. In terms of domain architecture, FDX-ACB spans serine 731–arginine 824.

The protein belongs to the phenylalanyl-tRNA synthetase beta subunit family. Type 1 subfamily. As to quaternary structure, tetramer of two alpha and two beta subunits. The cofactor is Mg(2+).

It localises to the cytoplasm. The enzyme catalyses tRNA(Phe) + L-phenylalanine + ATP = L-phenylalanyl-tRNA(Phe) + AMP + diphosphate + H(+). This is Phenylalanine--tRNA ligase beta subunit from Synechococcus sp. (strain JA-3-3Ab) (Cyanobacteria bacterium Yellowstone A-Prime).